We begin with the raw amino-acid sequence, 372 residues long: Gustatory and pheromone receptor 39a, isoform B (372 aa).

Over methionine 1–tyrosine 32 the chain is Cytoplasmic. Residues tryptophan 33–alanine 53 traverse the membrane as a helical segment. Residues alanine 54–leucine 59 are Extracellular-facing. The helical transmembrane segment at alanine 60–valine 80 threads the bilayer. Residues isoleucine 81–alanine 122 are Cytoplasmic-facing. A helical transmembrane segment spans residues valine 123–methionine 143. At valine 144–phenylalanine 147 the chain is on the extracellular side. A helical transmembrane segment spans residues glycine 148–tyrosine 168. At arginine 169–leucine 224 the chain is on the cytoplasmic side. The helical transmembrane segment at leucine 225–glutamine 245 threads the bilayer. The Extracellular portion of the chain corresponds to valine 246 to asparagine 265. A helical transmembrane segment spans residues aspartate 266–valine 286. Residues valine 287–alanine 348 are Cytoplasmic-facing. A helical transmembrane segment spans residues isoleucine 349–serine 368. Position 369 (isoleucine 369) is a topological domain, extracellular.

The protein belongs to the insect chemoreceptor superfamily. Gustatory receptor (GR) family. Gr21a subfamily. As to expression, expressed in the adult labellar chemosensory neurons. In larvae, is expressed in neurons of the terminal external chemosensory organ, as well as in the dorsal and posterior pharyngeal sense organs.

It localises to the cell membrane. Functionally, gustatory receptor which mediates acceptance or avoidance behavior, depending on its substrates. Plays a role in sustaining courtship behavior in males, possibly through the reception of a stimulating arrestant pheromone. The polypeptide is Gustatory and pheromone receptor 39a, isoform B (Gr39a) (Drosophila melanogaster (Fruit fly)).